The primary structure comprises 215 residues: Nascent polypeptide-associated complex subunit alpha (215 aa).

The tract at residues 1 to 81 (MPGEATETVP…SEKKARKAMS (81 aa)) is disordered. The span at 9–28 (VPATEQELPQPQAETGSGTE) shows a compositional bias: polar residues. Positions 29–42 (SDSDESVPELEEQD) are enriched in acidic residues. Ser-43 is subject to Phosphoserine; by ILK1. Residues 44-57 (TQATTQQAQLAAAA) show a composition bias toward low complexity. The interval 69 to 80 (QSRSEKKARKAM) is required for DNA-binding. One can recognise an NAC-A/B domain in the interval 70-135 (SRSEKKARKA…AKIEDLSQQA (66 aa)). An RNA/DNA-binding region spans residues 93–108 (RVTIRKSKNILFVITK). Ser-132 bears the Phosphoserine mark. Residue Lys-142 is modified to N6-acetyllysine; alternate. Lys-142 participates in a covalent cross-link: Glycyl lysine isopeptide (Lys-Gly) (interchain with G-Cter in SUMO2); alternate. Thr-159 is subject to Phosphothreonine; by GSK3-beta. The residue at position 161 (Thr-161) is a Phosphothreonine. 4 positions are modified to phosphoserine: Ser-166, Ser-186, Ser-191, and Ser-203. One can recognise a UBA domain in the interval 176–213 (VEVKDIELVMSQANVSRAKAVRALKNNSNDIVNAIMEL).

Belongs to the NAC-alpha family. In terms of assembly, part of the nascent polypeptide-associated complex (NAC), which is a heterodimer of NACA and BTF3 (via NAC-A/B domains). NAC associates with ribosomes through the BTF3/NACB subunit and contacts the ribosomal protein L23, which is positioned near the exiting site. Both subunits can contact nascent polypeptide chains. NACA may also form homodimers, and only this form binds DNA. Interacts with TBP and JUN. In terms of processing, phosphorylation of Ser-43 by ILK during cell adhesion may promote nuclear localization. Phosphorylation of Thr-159 by GSK3B may promote proteasome mediated degradation.

The protein resides in the cytoplasm. It is found in the nucleus. Functionally, prevents inappropriate targeting of non-secretory polypeptides to the endoplasmic reticulum (ER). Binds to nascent polypeptide chains as they emerge from the ribosome and blocks their interaction with the signal recognition particle (SRP), which normally targets nascent secretory peptides to the ER. Also reduces the inherent affinity of ribosomes for protein translocation sites in the ER membrane (M sites). May act as a specific coactivator for JUN, binding to DNA and stabilizing the interaction of JUN homodimers with target gene promoters. This Pongo abelii (Sumatran orangutan) protein is Nascent polypeptide-associated complex subunit alpha (NACA).